The primary structure comprises 102 residues: Putative nuclear receptor corepressor 1-like protein NCOR1P1 (102 aa).

The segment covering 1-18 (MSSSGYPPNQGAFSTEQS) has biased composition (polar residues). The disordered stretch occupies residues 1-68 (MSSSGYPPNQ…DQNASPSKLS (68 aa)). The stretch at 68 to 100 (SKEELIECMDRVDREIAKVEQQILKLKKKQVKV) forms a coiled coil.

Belongs to the N-CoR nuclear receptor corepressors family.

The polypeptide is Putative nuclear receptor corepressor 1-like protein NCOR1P1 (NCOR1P1) (Homo sapiens (Human)).